Reading from the N-terminus, the 365-residue chain is Patr class I histocompatibility antigen, A-108 alpha chain (365 aa).

Positions M1–A24 are cleaved as a signal peptide. An alpha-1 region spans residues G25–D114. Residues G25–I308 lie on the Extracellular side of the membrane. N-linked (GlcNAc...) asparagine glycosylation is present at N110. The tract at residues G115 to T206 is alpha-2. Intrachain disulfides connect C125–C188 and C227–C283. An alpha-3 region spans residues D207–W298. The Ig-like C1-type domain maps to P209 to T295. The connecting peptide stretch occupies residues E299–I308. A helical transmembrane segment spans residues V309–W332. At R333 to V365 the chain is on the cytoplasmic side. Positions R339–L360 are disordered. S343 carries the post-translational modification Phosphoserine. The residue at position 344 (Y344) is a Phosphotyrosine. A compositionally biased stretch (low complexity) spans Q346–S359. Phosphoserine is present on residues S349, S350, S352, S356, and S359.

The protein belongs to the MHC class I family. In terms of assembly, heterodimer of an alpha chain and a beta chain (beta-2-microglobulin).

It is found in the membrane. Functionally, involved in the presentation of foreign antigens to the immune system. This Pan troglodytes (Chimpanzee) protein is Patr class I histocompatibility antigen, A-108 alpha chain (Patr-A).